A 466-amino-acid chain; its full sequence is Heat stress transcription factor A-5 (466 aa).

The DNA-binding element occupies 21 to 115; the sequence is PAPFLVKTYE…LLKNIHRRKP (95 aa). The hydrophobic repeat HR-A/B stretch occupies residues 125 to 191; the sequence is SSTDQERAVL…KLLNFLETAI (67 aa). The Bipartite nuclear localization signal motif lies at 198-217; the sequence is KNFGKKVEQLDISAYNKKRR. Disordered stretches follow at residues 215-248, 272-300, and 422-466; these read KRRL…GNIF, HSIQ…LTKR, and TERP…QLTL. A compositionally biased stretch (basic and acidic residues) spans 218–233; the sequence is LPEVEQSKPPSEDSHL. Residues 414 to 423 carry the AHA motif; it reads DVFWEQFLTE. Polar residues-rich tracts occupy residues 425-438 and 455-466; these read PGSS…STYR and LRNTKNIEQLTL. The Nuclear export signal motif lies at 461-466; it reads IEQLTL.

Belongs to the HSF family. Class A subfamily. As to quaternary structure, homotrimer. Post-translationally, exhibits temperature-dependent phosphorylation.

It localises to the cytoplasm. The protein resides in the nucleus. In terms of biological role, transcriptional activator that specifically binds DNA sequence 5'-AGAAnnTTCT-3' known as heat shock promoter elements (HSE). The protein is Heat stress transcription factor A-5 (HSFA5) of Arabidopsis thaliana (Mouse-ear cress).